A 395-amino-acid polypeptide reads, in one-letter code: Pyruvate synthase subunit PorA (395 aa).

Heterotetramer of one alpha, one beta, one delta and one gamma chain.

It carries out the reaction 2 oxidized [2Fe-2S]-[ferredoxin] + pyruvate + CoA = 2 reduced [2Fe-2S]-[ferredoxin] + acetyl-CoA + CO2 + H(+). This chain is Pyruvate synthase subunit PorA (porA), found in Pyrococcus abyssi (strain GE5 / Orsay).